The sequence spans 428 residues: MSAIVDIIGREILDSRGNPTVECDVLLESGAMGRAAVPSGASTGEREAIELRDGDKSRYLGKGVLRAVENLNTEISEALMGLDAQEQTFVDRTLIELDGTDTKERLGANALLAASMAVARAAADESGLSLYRYFGGSGPMSMPVPMMNVINGGAHANNTLDLQELMILPVGATSFREALRWGAEVFHALKKLIHGQGMSTAVGDEGGFAPNVPNHEAAIQLILKAIAEAGYEPGSQIALGLDCASSEFYRDGKYTLAGEGGLSLSSQEFANLLATWCDKYPIISIEDGMAENDWEGWKLLTDQLGKKVQLVGDDLFVTNTRILKEGIQKGVANSILIKINQIGTLTETFAAIEMAKRAGYTAVVSHRSGETEDSTIADIAVATNAMQIKTGSLSRSDRMAKYNQLLRIEEELAEVASYPGLDAFYNLR.

(2R)-2-phosphoglycerate is bound at residue Q163. E205 (proton donor) is an active-site residue. Residues D242, E286, and D313 each coordinate Mg(2+). K338, R367, S368, and K389 together coordinate (2R)-2-phosphoglycerate. The Proton acceptor role is filled by K338.

The protein belongs to the enolase family. Requires Mg(2+) as cofactor.

The protein resides in the cytoplasm. The protein localises to the secreted. Its subcellular location is the cell surface. It catalyses the reaction (2R)-2-phosphoglycerate = phosphoenolpyruvate + H2O. The protein operates within carbohydrate degradation; glycolysis; pyruvate from D-glyceraldehyde 3-phosphate: step 4/5. In terms of biological role, catalyzes the reversible conversion of 2-phosphoglycerate (2-PG) into phosphoenolpyruvate (PEP). It is essential for the degradation of carbohydrates via glycolysis. The polypeptide is Enolase (Bordetella petrii (strain ATCC BAA-461 / DSM 12804 / CCUG 43448)).